Reading from the N-terminus, the 229-residue chain is Platelet-activating factor acetylhydrolase IB subunit alpha2 (229 aa).

Ser2 carries the N-acetylserine modification. A Phosphoserine modification is found at Ser2. The active site involves Ser48. At Ser64 the chain carries Phosphoserine. Catalysis depends on residues Asp193 and His196. Thr220 carries the post-translational modification Phosphothreonine.

The protein belongs to the 'GDSL' lipolytic enzyme family. Platelet-activating factor acetylhydrolase IB beta/gamma subunits subfamily. Forms a catalytic dimer which is either homodimer (alpha2/alpha2 homodimer) or heterodimer with PAFAH1B3 (alpha2/alpha1 heterodimer). Component of the cytosolic (PAF-AH (I)) heterotetrameric enzyme, which is composed of PAFAH1B1 (beta), PAFAH1B2 (alpha2) and PAFAH1B3 (alpha1) subunits. The catalytic activity of the enzyme resides in the alpha1 (PAFAH1B3) and alpha2 (PAFAH1B2) subunits, whereas the beta subunit (PAFAH1B1) has regulatory activity. Trimer formation is not essential for the catalytic activity. Interacts (homodimer form) with PAFAH1B1 (homodimer form); PAFAH1B2 competes with NDEL1 for PAFAH1B1 binding. Interacts with VLDLR; this interaction may modulate the Reelin pathway.

The protein resides in the cytoplasm. It carries out the reaction a 1-O-alkyl-2-acetyl-sn-glycero-3-phosphocholine + H2O = a 1-O-alkyl-sn-glycero-3-phosphocholine + acetate + H(+). The catalysed reaction is 1-O-hexadecyl-2-acetyl-sn-glycero-3-phosphocholine + H2O = 1-O-hexadecyl-sn-glycero-3-phosphocholine + acetate + H(+). The enzyme catalyses 1-O-hexadecyl-2-acetyl-sn-glycero-3-phosphate + H2O = 1-O-hexadecyl-sn-glycero-3-phosphate + acetate + H(+). It catalyses the reaction 1-O-hexadecyl-2-acetyl-sn-glycero-3-phosphoethanolamine + H2O = 1-O-hexadecyl-sn-glycero-3-phosphoethanolamine + acetate + H(+). Beta subunit (PAFAH1B1) stimulates the acetylhydrolase activity of the alpha2/alpha2 catalytic homodimer. Its function is as follows. Alpha2 catalytic subunit of the cytosolic type I platelet-activating factor (PAF) acetylhydrolase (PAF-AH (I)) heterotetrameric enzyme that catalyzes the hydrolyze of the acetyl group at the sn-2 position of PAF and its analogs and modulates the action of PAF. The activity and substrate specificity of PAF-AH (I) are affected by its subunit composition. The alpha2/alpha2 homodimer (PAFAH1B2/PAFAH1B2 homodimer) hydrolyzes PAF and 1-O-alkyl-2-acetyl-sn-glycero-3-phosphorylethanolamine (AAGPE) more efficiently than 1-O-alkyl-2-acetyl-sn-glycero-3-phosphoric acid (AAGPA). In contrast, the alpha1/alpha2 heterodimer(PAFAH1B3/PAFAH1B3 heterodimer) hydrolyzes AAGPA more efficiently than PAF, but has little hydrolytic activity towards AAGPE. May play a role in male germ cell meiosis during the late pachytenestage and meiotic divisions as well as early spermiogenesis. The chain is Platelet-activating factor acetylhydrolase IB subunit alpha2 from Pongo abelii (Sumatran orangutan).